The sequence spans 426 residues: Enolase 1 (426 aa).

Residue glutamine 163 participates in (2R)-2-phosphoglycerate binding. Glutamate 205 (proton donor) is an active-site residue. Mg(2+) is bound by residues aspartate 242, glutamate 283, and aspartate 310. Lysine 335, arginine 364, serine 365, and lysine 386 together coordinate (2R)-2-phosphoglycerate. The active-site Proton acceptor is the lysine 335.

This sequence belongs to the enolase family. Mg(2+) is required as a cofactor.

The protein localises to the cytoplasm. It is found in the secreted. Its subcellular location is the cell surface. The enzyme catalyses (2R)-2-phosphoglycerate = phosphoenolpyruvate + H2O. The protein operates within carbohydrate degradation; glycolysis; pyruvate from D-glyceraldehyde 3-phosphate: step 4/5. In terms of biological role, catalyzes the reversible conversion of 2-phosphoglycerate (2-PG) into phosphoenolpyruvate (PEP). It is essential for the degradation of carbohydrates via glycolysis. In Streptomyces coelicolor (strain ATCC BAA-471 / A3(2) / M145), this protein is Enolase 1.